We begin with the raw amino-acid sequence, 434 residues long: MHDIKAIRDNPQAFDAAFTRRGLAPIAGSLMKLDEVRRAAVQAAEQAQARRNAASKEIGDAKKAKDNARAEALMAEVTELKTTMPALDAAVKEADEALKKALSEIPNLPLPEVPEGADEHGNVEHHRFGEKPSYSFTPKPHYDLGEALGMMDFEAAAKLSGARFTVLKKGLARLERAIGQFFLDVHTGDHGYTEVNPPLLVKDDAMFGTAQLPKFREDQFAAGAIGSGGEGYWLIPTAEVSLTNLVRESILDEKELPMRLTALTPCFRAEAGAAGRDTRGMIRQHQFTKVELVSITTPEQSKDEHERMLSCAEEVLRRLGLHYRVMTLCTGDMGFASQKTYDIEVWMPGQGEGGAYREISSCSVCGDFQARRMDARSRGSDGKPRFVHTLNGSGTAVGRALIAVIENYQQEDGSIAVPDVLQPYMGGLKVIAKA.

Position 237–239 (237–239 (TAE)) interacts with L-serine. 268–270 (RAE) is a binding site for ATP. Residue E291 participates in L-serine binding. Position 358–361 (358–361 (EISS)) interacts with ATP. S393 is an L-serine binding site.

This sequence belongs to the class-II aminoacyl-tRNA synthetase family. Type-1 seryl-tRNA synthetase subfamily. As to quaternary structure, homodimer. The tRNA molecule binds across the dimer.

The protein resides in the cytoplasm. It catalyses the reaction tRNA(Ser) + L-serine + ATP = L-seryl-tRNA(Ser) + AMP + diphosphate + H(+). The enzyme catalyses tRNA(Sec) + L-serine + ATP = L-seryl-tRNA(Sec) + AMP + diphosphate + H(+). It functions in the pathway aminoacyl-tRNA biosynthesis; selenocysteinyl-tRNA(Sec) biosynthesis; L-seryl-tRNA(Sec) from L-serine and tRNA(Sec): step 1/1. In terms of biological role, catalyzes the attachment of serine to tRNA(Ser). Is also able to aminoacylate tRNA(Sec) with serine, to form the misacylated tRNA L-seryl-tRNA(Sec), which will be further converted into selenocysteinyl-tRNA(Sec). This Rhodopseudomonas palustris (strain ATCC BAA-98 / CGA009) protein is Serine--tRNA ligase.